A 219-amino-acid chain; its full sequence is Ribose-5-phosphate isomerase A (219 aa).

Substrate-binding positions include 28-31 (TGST), 81-84 (DGAD), and 94-97 (KGGG). Residue glutamate 103 is the Proton acceptor of the active site. Lysine 121 contacts substrate.

This sequence belongs to the ribose 5-phosphate isomerase family. In terms of assembly, homodimer.

The catalysed reaction is aldehydo-D-ribose 5-phosphate = D-ribulose 5-phosphate. Its pathway is carbohydrate degradation; pentose phosphate pathway; D-ribose 5-phosphate from D-ribulose 5-phosphate (non-oxidative stage): step 1/1. Its function is as follows. Catalyzes the reversible conversion of ribose-5-phosphate to ribulose 5-phosphate. The polypeptide is Ribose-5-phosphate isomerase A (Shewanella pealeana (strain ATCC 700345 / ANG-SQ1)).